Consider the following 116-residue polypeptide: Large ribosomal subunit protein bL17 (116 aa).

The protein belongs to the bacterial ribosomal protein bL17 family. In terms of assembly, part of the 50S ribosomal subunit. Contacts protein L32.

In Prochlorococcus marinus (strain MIT 9211), this protein is Large ribosomal subunit protein bL17.